We begin with the raw amino-acid sequence, 134 residues long: Small ribosomal subunit protein uS8c (134 aa).

The protein belongs to the universal ribosomal protein uS8 family. In terms of assembly, part of the 30S ribosomal subunit.

The protein resides in the plastid. Its subcellular location is the chloroplast. One of the primary rRNA binding proteins, it binds directly to 16S rRNA central domain where it helps coordinate assembly of the platform of the 30S subunit. The polypeptide is Small ribosomal subunit protein uS8c (rps8) (Phaseolus angularis (Azuki bean)).